The primary structure comprises 7639 residues: Nonribosomal peptide synthetase 4 (7639 aa).

The segment at 244–636 (WQGAMRPDAE…AGRKDAQIKF (393 aa)) is adenylation 1. A Carrier 1 domain is found at 776 to 852 (TFSNGTESQL…ALARHVKEIE (77 aa)). S813 carries the post-translational modification O-(pantetheine 4'-phosphoryl)serine. Residues 865–1295 (FELSPIQRLY…EQNLSLLVES (431 aa)) are epimerization 1. The interval 1337–1767 (VEDIYPCSPM…HLGPRHHQQI (431 aa)) is condensation 1. The segment at 1786–2181 (FEEQAILRPE…FGRKDTQVKL (396 aa)) is adenylation 2. A Carrier 2 domain is found at 2313–2389 (APASDMEKQL…DMAQSALPLS (77 aa)). S2350 carries the post-translational modification O-(pantetheine 4'-phosphoryl)serine. The condensation 2 stretch occupies residues 2426–2852 (VEDIYPCTPL…LISTRDYQSL (427 aa)). The tract at residues 2878-3269 (QPLDKLAVCA…QGRKDNQVKI (392 aa)) is adenylation 3. In terms of domain architecture, Carrier 3 spans 3403-3479 (REATETETKL…KLASFVQAVE (77 aa)). Position 3440 is an O-(pantetheine 4'-phosphoryl)serine (S3440). The tract at residues 3491–3928 (AFPLSPIQKL…RMTQAKAEPQ (438 aa)) is epimerization 2. Residues 3961–4389 (EAVYPCSPVQ…VSDDCAQQLT (429 aa)) are condensation 3. Residues 4407-4810 (FERNVQSLPH…VSRKDTQIKL (404 aa)) are adenylation 4. The region spanning 4944 to 5020 (APTTMMQRKL…EMATCCGHSE (77 aa)) is the Carrier 4 domain. S4981 is subject to O-(pantetheine 4'-phosphoryl)serine. The condensation 4 stretch occupies residues 5058-5478 (QDLYPCSSLQ…QFCSEEDLQM (421 aa)). An adenylation 5 region spans residues 5498–5900 (FWQSVATYHD…IGRKDNQVKL (403 aa)). The 77-residue stretch at 6039–6115 (TDTTFVGQLL…DLVTLIEKEG (77 aa)) folds into the Carrier 5 domain. S6076 bears the O-(pantetheine 4'-phosphoryl)serine mark. Residues 6133 to 6567 (FALSPIQQLF…EVLGNMAMEL (435 aa)) form an epimerization 3 region. The segment at 6607 to 7032 (VEDMYPCSPM…EALSHLRVSQ (426 aa)) is condensation 5. Positions 7088–7164 (RDKDQVYNKL…TLLNCLRDKS (77 aa)) constitute a Carrier 6 domain. S7125 is modified (O-(pantetheine 4'-phosphoryl)serine). Positions 7254 to 7603 (LDGEGPLDVA…SNTEVCFLYR (350 aa)) are condensation 6.

Belongs to the NRP synthetase family.

The enzyme catalyses D-allo-threonine + D-leucine + D-alanine + L-proline + 2 L-leucine + A = fusahexin + AH2 + 6 H2O. Its pathway is secondary metabolite biosynthesis. Nonribosomal peptide synthetase; part of the gene cluster that mediates the biosynthesis of the fusahexin, a cyclic hydrophobic hexapeptide with the amino acid sequence cyclo-(D-Ala-L-Leu-D-allo-Thr-L-Pro-D-Leu-L-Leu) that plays an important role in cell surface hydrophobicity. Fusahexin might also play a role in virulence, sensitivity to osmotic stress and oxidative stress. NRPS4 is the only enzyme within the cluster and its 5 catalytic modules are sufficient to produce fusahexin. The modules 1 to 4 incorporate respectively D-alanine, L-leucine, D-allo-threonine, and L-proline, which is supported by the presence of epimerase domains in modules 1 and 3, which incorporate D-amino acids. The terminal module is responsible for incorporation of the two adjacent leucine units, where the epimerase domain is only used to convert the first unit to D-leucine. The terminal condensation domain (Ct) is involved in cyclization with D-alanine and thereby releasing of fusahexin. In Gibberella zeae (strain ATCC MYA-4620 / CBS 123657 / FGSC 9075 / NRRL 31084 / PH-1) (Wheat head blight fungus), this protein is Nonribosomal peptide synthetase 4.